We begin with the raw amino-acid sequence, 393 residues long: Phosphoglycerate kinase (393 aa).

Substrate contacts are provided by residues 21–23, Arg36, 59–62, Arg118, and Arg151; these read DFN and HLGR. ATP contacts are provided by residues Lys201, Glu323, and 349-352; that span reads GGDS.

Belongs to the phosphoglycerate kinase family. Monomer.

It localises to the cytoplasm. The enzyme catalyses (2R)-3-phosphoglycerate + ATP = (2R)-3-phospho-glyceroyl phosphate + ADP. It functions in the pathway carbohydrate degradation; glycolysis; pyruvate from D-glyceraldehyde 3-phosphate: step 2/5. This is Phosphoglycerate kinase from Moorella thermoacetica (strain ATCC 39073 / JCM 9320).